We begin with the raw amino-acid sequence, 543 residues long: UBP9-binding protein bun62 (543 aa).

Ser43 bears the Phosphoserine mark. WD repeat units lie at residues 239–279 (LNSS…QPLH), 320–361 (FSKS…DVFH), 362–401 (SYFA…LVAR), 404–448 (GHKS…IHRP), and 513–542 (VDDS…TWQR).

In terms of assembly, interacts with ubp9 and bun107.

Its subcellular location is the nucleus. It localises to the cytoplasm. It is found in the cell tip. In terms of biological role, required for the ubp9 recruitment to septa and cell tips but also for its enzymatic activity at these specific locations. The sequence is that of UBP9-binding protein bun62 (bun62) from Schizosaccharomyces pombe (strain 972 / ATCC 24843) (Fission yeast).